Reading from the N-terminus, the 447-residue chain is ATP-dependent protease ATPase subunit HslU (447 aa).

Residues I17 and 59-64 (GVGKTE) each bind ATP. The interval 136–160 (PPARGGFQGEPTAEEKPTEKKESAT) is disordered. Over residues 148 to 159 (AEEKPTEKKESA) the composition is skewed to basic and acidic residues. Residues D260, E325, and R397 each contribute to the ATP site.

Belongs to the ClpX chaperone family. HslU subfamily. In terms of assembly, a double ring-shaped homohexamer of HslV is capped on each side by a ring-shaped HslU homohexamer. The assembly of the HslU/HslV complex is dependent on binding of ATP.

It localises to the cytoplasm. In terms of biological role, ATPase subunit of a proteasome-like degradation complex; this subunit has chaperone activity. The binding of ATP and its subsequent hydrolysis by HslU are essential for unfolding of protein substrates subsequently hydrolyzed by HslV. HslU recognizes the N-terminal part of its protein substrates and unfolds these before they are guided to HslV for hydrolysis. The polypeptide is ATP-dependent protease ATPase subunit HslU (Coxiella burnetii (strain RSA 331 / Henzerling II)).